Here is a 679-residue protein sequence, read N- to C-terminus: Protein hook (679 aa).

Residues 6–123 enclose the Calponin-homology (CH) domain; it reads NEMYYSLLEW…RLLQLVLGCA (118 aa). Coiled coils occupy residues 135–437 and 480–574; these read EIMC…LKCG and QTAL…QEIL.

Belongs to the hook family. As to quaternary structure, homodimer. Interacts with microtubules via its N-terminus.

Its subcellular location is the cytoplasm. It is found in the cytoskeleton. The protein localises to the endosome. The protein resides in the synapse. Its function is as follows. Involved in endocytic trafficking by stabilizing organelles of the endocytic pathway. Probably acts as a cytoskeletal linker protein required to tether endosome vesicles to the cytoskeleton. Involved in modulation of endocytosis at stages required for down-regulation of membrane proteins that control synapse size. Not involved in synaptic vesicle recycling. Required in R7 cells for boss endocytosis into multivesicular bodies (MVBs). Has a role in regulating adult longevity. This chain is Protein hook, found in Drosophila erecta (Fruit fly).